The primary structure comprises 243 residues: Derlin-1.1 (243 aa).

Residues 1-20 lie on the Cytoplasmic side of the membrane; sequence MSSPAEYYKSLPPISKAYGT. A helical transmembrane segment spans residues 21 to 41; the sequence is LCFFTTVLVQLQILHPLFLYL. Residues 42–55 are Lumenal-facing; sequence DYPLVFKKFEIWRL. Residues 56 to 76 form a helical membrane-spanning segment; sequence LTSFFFLAPFSMKFGIRLLMI. Residues 77-94 are Cytoplasmic-facing; it reads ARYGVMLEKGAFDKRTAD. A helical membrane pass occupies residues 95–115; sequence FLWMMIFGAISLLVLSIIPLF. Over 116–157 the chain is Lumenal; the sequence is NSFFLGIPMVSMLLYVWSRENPNAQINIYGLVQLRSFYLPWA. The helical transmembrane segment at 158 to 178 threads the bilayer; sequence MLLLDVIFGSSLMPGLLGIMV. Topologically, residues 179–243 are cytoplasmic; that stretch reads GHLYYFFAVL…FRGRSYRLNQ (65 aa). The interval 219 to 243 is disordered; sequence SPVRPPANGNSGSGVFRGRSYRLNQ.

This sequence belongs to the derlin family. As to expression, expressed in roots, stalks, leaves, immature ears, embryo and endosperm.

The protein localises to the endoplasmic reticulum membrane. Functionally, may be involved in the degradation process of specific misfolded endoplasmic reticulum (ER) luminal proteins. This is Derlin-1.1 (DER1.1) from Zea mays (Maize).